A 622-amino-acid polypeptide reads, in one-letter code: WD repeat-containing protein 70 (622 aa).

Residues 36-55 (RTAVERSKQTLEAREKEEQL) are compositionally biased toward basic and acidic residues. A disordered region spans residues 36-141 (RTAVERSKQT…DNPVKDIPDS (106 aa)). Residues 67–84 (SSSGQKKTKASGSSSGSE) are compositionally biased toward low complexity. Residues 120–132 (SDDEDDEEHEDDD) show a composition bias toward acidic residues. 7 WD repeats span residues 148–187 (HGTK…ASLQ), 195–236 (CECH…ECVK), 249–289 (GHTA…KHKG), 298–337 (GKPV…HTKF), 344–383 (TPGT…NPLN), 387–434 (GLEN…KIYE), and 437–476 (VTEA…QRGA). Over residues 508 to 533 (REPRQRSTRKQLEKDRLDPVKSHKPE) the composition is skewed to basic and acidic residues. Disordered stretches follow at residues 508 to 549 (REPR…GTHG) and 602 to 622 (AEVD…KRKI). Positions 539-549 (PGRGGRVGTHG) are enriched in gly residues. The span at 604-614 (VDSDEEEPDNE) shows a compositional bias: acidic residues.

Belongs to the WD repeat GAD-1 family.

In Xenopus laevis (African clawed frog), this protein is WD repeat-containing protein 70 (wdr70).